The primary structure comprises 659 residues: DNA ligase (659 aa).

NAD(+) contacts are provided by residues 32 to 36, 81 to 82, and glutamate 110; these read DAEYD and SL. The active-site N6-AMP-lysine intermediate is lysine 112. NAD(+) is bound by residues arginine 133, glutamate 168, lysine 284, and lysine 308. 4 residues coordinate Zn(2+): cysteine 402, cysteine 405, cysteine 420, and cysteine 425. The region spanning 582–659 is the BRCT domain; it reads AKPQIFAGKS…SEEEFAELLP (78 aa).

Belongs to the NAD-dependent DNA ligase family. LigA subfamily. Mg(2+) is required as a cofactor. It depends on Mn(2+) as a cofactor.

The catalysed reaction is NAD(+) + (deoxyribonucleotide)n-3'-hydroxyl + 5'-phospho-(deoxyribonucleotide)m = (deoxyribonucleotide)n+m + AMP + beta-nicotinamide D-nucleotide.. DNA ligase that catalyzes the formation of phosphodiester linkages between 5'-phosphoryl and 3'-hydroxyl groups in double-stranded DNA using NAD as a coenzyme and as the energy source for the reaction. It is essential for DNA replication and repair of damaged DNA. The protein is DNA ligase of Desulfitobacterium hafniense (strain DSM 10664 / DCB-2).